Here is a 737-residue protein sequence, read N- to C-terminus: Phosphoribosylformylglycinamidine synthase subunit PurL (737 aa).

His-48 is a catalytic residue. ATP-binding residues include Tyr-51 and Lys-90. Glu-92 is a Mg(2+) binding site. Residues 93–96 (SHNH) and Arg-115 contribute to the substrate site. His-94 (proton acceptor) is an active-site residue. Asp-116 contacts Mg(2+). Residue Gln-244 coordinates substrate. Residue Asp-272 coordinates Mg(2+). 316–318 (ESQ) is a substrate binding site. Residues Asp-500 and Gly-537 each coordinate ATP. Asn-538 contacts Mg(2+). Ser-540 is a binding site for substrate.

The protein belongs to the FGAMS family. As to quaternary structure, monomer. Part of the FGAM synthase complex composed of 1 PurL, 1 PurQ and 2 PurS subunits.

Its subcellular location is the cytoplasm. It catalyses the reaction N(2)-formyl-N(1)-(5-phospho-beta-D-ribosyl)glycinamide + L-glutamine + ATP + H2O = 2-formamido-N(1)-(5-O-phospho-beta-D-ribosyl)acetamidine + L-glutamate + ADP + phosphate + H(+). It functions in the pathway purine metabolism; IMP biosynthesis via de novo pathway; 5-amino-1-(5-phospho-D-ribosyl)imidazole from N(2)-formyl-N(1)-(5-phospho-D-ribosyl)glycinamide: step 1/2. Its function is as follows. Part of the phosphoribosylformylglycinamidine synthase complex involved in the purines biosynthetic pathway. Catalyzes the ATP-dependent conversion of formylglycinamide ribonucleotide (FGAR) and glutamine to yield formylglycinamidine ribonucleotide (FGAM) and glutamate. The FGAM synthase complex is composed of three subunits. PurQ produces an ammonia molecule by converting glutamine to glutamate. PurL transfers the ammonia molecule to FGAR to form FGAM in an ATP-dependent manner. PurS interacts with PurQ and PurL and is thought to assist in the transfer of the ammonia molecule from PurQ to PurL. This is Phosphoribosylformylglycinamidine synthase subunit PurL from Sulfurimonas denitrificans (strain ATCC 33889 / DSM 1251) (Thiomicrospira denitrificans (strain ATCC 33889 / DSM 1251)).